A 436-amino-acid chain; its full sequence is 2-aminohexano-6-lactam racemase (436 aa).

Pyridoxal 5'-phosphate is bound by residues 110–111 (GS), Tyr-137, and 238–241 (DEVK). Residue Tyr-137 is part of the active site. Position 267 is an N6-(pyridoxal phosphate)lysine (Lys-267). Residue Thr-295 participates in pyridoxal 5'-phosphate binding.

This sequence belongs to the class-III pyridoxal-phosphate-dependent aminotransferase family. Monomer. Requires pyridoxal 5'-phosphate as cofactor.

It catalyses the reaction L-2-aminohexano-6-lactam = D-2-aminohexano-6-lactam. Its function is as follows. catalyzes the interconversion of L-alpha-amino-epsilon-caprolactam and D-alpha-amino-epsilon-caprolactam. In Achromobacter obae, this protein is 2-aminohexano-6-lactam racemase.